The following is a 317-amino-acid chain: MKNGGGNRVAVVGTGFVGSSYAFALMNQGIADEIVLIDANENKAKGDAMDLNHGKVFAPNPTNIWYGDYHDCRDADLVVICAGANQKPGETRLDLVDKNIAIFRSIVESVMASGFQGLFLVATNPVDILTYATWKFSGLPYERVIGSGTILDTARFRFLLGEYFDIAPTNVHAYIIGEHGDTELPVWSQADIGGVPIRKLIESKGEQAREELERIFVNVRDAAYQIIEKKGATYYGIAMGLARVTRAILHNENAILTVSAYLDGLYGERDVYIGVPAVINRHGIREVIELELDDNEQKWFQHSAATLKGVLARSFAQ.

NAD(+)-binding positions include V17, D38, K43, Y69, and 83–84; that span reads GA. Positions 86 and 92 each coordinate substrate. NAD(+) contacts are provided by residues S105, 122 to 124, and S147; that span reads ATN. A substrate-binding site is contributed by 124–127; that stretch reads NPVD. Residue 152 to 155 participates in substrate binding; the sequence is DTAR. Beta-D-fructose 1,6-bisphosphate contacts are provided by R157 and H172. Catalysis depends on H179, which acts as the Proton acceptor. A Phosphotyrosine modification is found at Y224. T233 contributes to the substrate binding site.

The protein belongs to the LDH/MDH superfamily. LDH family. As to quaternary structure, homotetramer.

It is found in the cytoplasm. The enzyme catalyses (S)-lactate + NAD(+) = pyruvate + NADH + H(+). It functions in the pathway fermentation; pyruvate fermentation to lactate; (S)-lactate from pyruvate: step 1/1. With respect to regulation, allosterically activated by fructose 1,6-bisphosphate (FBP). Catalyzes the conversion of lactate to pyruvate. The sequence is that of L-lactate dehydrogenase from Geobacillus thermodenitrificans (strain NG80-2).